A 111-amino-acid chain; its full sequence is uncharacterized protein (111 aa).

The protein resides in the mitochondrion. This is an uncharacterized protein from Arabidopsis thaliana (Mouse-ear cress).